A 366-amino-acid chain; its full sequence is Peptide chain release factor 1 (366 aa).

Gln-230 is subject to N5-methylglutamine. 2 stretches are compositionally biased toward basic and acidic residues: residues 283–293 and 315–328; these read ARDAQEARDRA and VTDHRLEGDSKNHP. The tract at residues 283 to 335 is disordered; the sequence is ARDAQEARDRAAQVGSGERSEKIRTYNYPQNRVTDHRLEGDSKNHPLDSVMAG.

It belongs to the prokaryotic/mitochondrial release factor family. Methylated by PrmC. Methylation increases the termination efficiency of RF1.

Its subcellular location is the cytoplasm. In terms of biological role, peptide chain release factor 1 directs the termination of translation in response to the peptide chain termination codons UAG and UAA. In Deinococcus deserti (strain DSM 17065 / CIP 109153 / LMG 22923 / VCD115), this protein is Peptide chain release factor 1.